Consider the following 274-residue polypeptide: 2,3,4,5-tetrahydropyridine-2,6-dicarboxylate N-succinyltransferase (274 aa).

The substrate site is built by R104 and D141.

The protein belongs to the transferase hexapeptide repeat family. As to quaternary structure, homotrimer.

The protein resides in the cytoplasm. It carries out the reaction (S)-2,3,4,5-tetrahydrodipicolinate + succinyl-CoA + H2O = (S)-2-succinylamino-6-oxoheptanedioate + CoA. Its pathway is amino-acid biosynthesis; L-lysine biosynthesis via DAP pathway; LL-2,6-diaminopimelate from (S)-tetrahydrodipicolinate (succinylase route): step 1/3. The polypeptide is 2,3,4,5-tetrahydropyridine-2,6-dicarboxylate N-succinyltransferase (Shewanella putrefaciens (strain CN-32 / ATCC BAA-453)).